Consider the following 312-residue polypeptide: Probable splicing factor, arginine/serine-rich 1 (312 aa).

The region spanning 3 to 73 (ARIYIGRLTS…ERVILDYSKP (71 aa)) is the RRM 1 domain. Disordered stretches follow at residues 69 to 125 (DYSK…GRPY) and 196 to 312 (KMID…DGDN). The segment covering 74–90 (RGGGGDRGGFGGGGRGG) has biased composition (gly residues). Residues 103–121 (GRDRFDRYDRGPPRRESRY) are compositionally biased toward basic and acidic residues. Residues 129–202 (HRVVVENLSS…RKIKMIDDSQ (74 aa)) form the RRM 2 domain. Residues 206-259 (SRSRSNSRSRSRSRSRDRRRSRSRSSSRSKSRSRSPPKRSRRESKSKSRSRSRS) are compositionally biased toward basic residues.

This sequence belongs to the splicing factor SR family. Post-translationally, extensively phosphorylated on serine residues in the RS domain.

It is found in the nucleus. Its function is as follows. Plays a functionally redundant role in spermatogenesis and growth rate control. The polypeptide is Probable splicing factor, arginine/serine-rich 1 (rsp-1) (Caenorhabditis elegans).